The chain runs to 236 residues: 2-C-methyl-D-erythritol 4-phosphate cytidylyltransferase (236 aa).

This sequence belongs to the IspD/TarI cytidylyltransferase family. IspD subfamily.

The catalysed reaction is 2-C-methyl-D-erythritol 4-phosphate + CTP + H(+) = 4-CDP-2-C-methyl-D-erythritol + diphosphate. It functions in the pathway isoprenoid biosynthesis; isopentenyl diphosphate biosynthesis via DXP pathway; isopentenyl diphosphate from 1-deoxy-D-xylulose 5-phosphate: step 2/6. Its function is as follows. Catalyzes the formation of 4-diphosphocytidyl-2-C-methyl-D-erythritol from CTP and 2-C-methyl-D-erythritol 4-phosphate (MEP). The protein is 2-C-methyl-D-erythritol 4-phosphate cytidylyltransferase of Azoarcus sp. (strain BH72).